The sequence spans 565 residues: UV-stimulated scaffold protein A homolog (565 aa).

Positions 11-156 (RKNLNRILQE…VTLRKTKFVD (146 aa)) are VHS-like. Residues 155 to 215 (VDYENGEKKI…ELETTMEMLV (61 aa)) adopt a coiled-coil conformation. Residues 441-468 (DRECLAKLPSGALCKRKDMFKCPLHGPL) form a UVSSA-type zinc finger. Zn(2+)-binding residues include Cys444, Cys454, Cys462, and His465. Residues 480–510 (DEDRLKEIDRKERKRLKEAEEFSRKIVKEYE) are a coiled coil. 2 disordered regions span residues 510–530 (ESKTKRKRKHEEETSVRSRLQ) and 542–565 (VSADITSQQRSRLEKNFSHQFSHL).

This sequence belongs to the UVSSA family.

It localises to the chromosome. Functionally, factor involved in transcription-coupled nucleotide excision repair (TC-NER) in response to UV damage. TC-NER allows RNA polymerase II-blocking lesions to be rapidly removed from the transcribed strand of active genes. The sequence is that of UV-stimulated scaffold protein A homolog from Caenorhabditis briggsae.